The chain runs to 280 residues: 3-dehydroshikimate dehydratase (280 aa).

Substrate is bound by residues Tyr70, Arg102, and Glu142. Glu142 contacts Mn(2+). His144 functions as the Proton acceptor in the catalytic mechanism. Positions 172 and 175 each coordinate substrate. Position 172 (Asp172) interacts with Mn(2+). His198 serves as a coordination point for Mn(2+). Tyr217 and Glu253 together coordinate substrate. Residue Glu253 participates in Mn(2+) binding.

As to quaternary structure, homodimer. Requires Mn(2+) as cofactor.

It catalyses the reaction 3-dehydroshikimate = 3,4-dihydroxybenzoate + H2O. The protein operates within aromatic compound metabolism; 3,4-dihydroxybenzoate biosynthesis; 3,4-dihydroxybenzoate from 3-dehydroquinate: step 2/2. It functions in the pathway siderophore biosynthesis; petrobactin biosynthesis. In terms of biological role, involved in the biosynthesis of petrobactin, a catecholate siderophore that functions in both iron acquisition and virulence. Catalyzes the conversion of 3-dehydroshikimate to 3,4-dihydroxybenzoate (3,4-DHBA). This Bacillus anthracis protein is 3-dehydroshikimate dehydratase.